Consider the following 205-residue polypeptide: Putative 3-methyladenine DNA glycosylase (205 aa).

The protein belongs to the DNA glycosylase MPG family.

This is Putative 3-methyladenine DNA glycosylase from Bacillus cereus (strain AH187).